Consider the following 168-residue polypeptide: GTP-dependent dephospho-CoA kinase (168 aa).

GTP contacts are provided by aspartate 40, valine 41, valine 42, aspartate 59, and glutamate 112.

This sequence belongs to the GTP-dependent DPCK family.

The enzyme catalyses 3'-dephospho-CoA + GTP = GDP + CoA + H(+). The protein operates within cofactor biosynthesis; coenzyme A biosynthesis. Its function is as follows. Catalyzes the GTP-dependent phosphorylation of the 3'-hydroxyl group of dephosphocoenzyme A to form coenzyme A (CoA). The chain is GTP-dependent dephospho-CoA kinase from Methanoregula boonei (strain DSM 21154 / JCM 14090 / 6A8).